The following is a 163-amino-acid chain: ATP synthase subunit b 1 (163 aa).

The helical transmembrane segment at 6–26 threads the bilayer; it reads LAELWVAVAFLLFVGILIYVG.

Belongs to the ATPase B chain family. F-type ATPases have 2 components, F(1) - the catalytic core - and F(0) - the membrane proton channel. F(1) has five subunits: alpha(3), beta(3), gamma(1), delta(1), epsilon(1). F(0) has three main subunits: a(1), b(2) and c(10-14). The alpha and beta chains form an alternating ring which encloses part of the gamma chain. F(1) is attached to F(0) by a central stalk formed by the gamma and epsilon chains, while a peripheral stalk is formed by the delta and b chains.

The protein resides in the cell inner membrane. F(1)F(0) ATP synthase produces ATP from ADP in the presence of a proton or sodium gradient. F-type ATPases consist of two structural domains, F(1) containing the extramembraneous catalytic core and F(0) containing the membrane proton channel, linked together by a central stalk and a peripheral stalk. During catalysis, ATP synthesis in the catalytic domain of F(1) is coupled via a rotary mechanism of the central stalk subunits to proton translocation. Functionally, component of the F(0) channel, it forms part of the peripheral stalk, linking F(1) to F(0). The polypeptide is ATP synthase subunit b 1 (Xanthobacter autotrophicus (strain ATCC BAA-1158 / Py2)).